The primary structure comprises 129 residues: Small ribosomal subunit protein uS11 (129 aa).

Belongs to the universal ribosomal protein uS11 family. In terms of assembly, part of the 30S ribosomal subunit. Interacts with proteins S7 and S18. Binds to IF-3.

Located on the platform of the 30S subunit, it bridges several disparate RNA helices of the 16S rRNA. Forms part of the Shine-Dalgarno cleft in the 70S ribosome. The sequence is that of Small ribosomal subunit protein uS11 from Mesorhizobium japonicum (strain LMG 29417 / CECT 9101 / MAFF 303099) (Mesorhizobium loti (strain MAFF 303099)).